Here is an 857-residue protein sequence, read N- to C-terminus: Trehalose transporter 1 (857 aa).

Disordered stretches follow at residues 1 to 28 (MSGR…KLKE) and 62 to 202 (DPFL…QKAT). At 1–392 (MSGRDNRGAG…VYRPTTNPIY (392 aa)) the chain is on the cytoplasmic side. Alanine 9 is modified (phosphothreonine). The residue at position 12 (glycine 12) is a Phosphoserine. The span at 69-81 (VSPQRHPQNTVRT) shows a compositional bias: polar residues. The span at 134-143 (EIREHRDRQQ) shows a compositional bias: basic and acidic residues. Positions 171–181 (GNSNTNSNKAA) are enriched in polar residues. 3 positions are modified to phosphoserine: serine 248, serine 249, and serine 250. Disordered stretches follow at residues 249–269 (SSEE…HQSL) and 280–299 (VLQG…EHKR). Serine 320 and serine 322 each carry phosphoserine. Positions 327–346 (LTSRQHFQQQRSISTDSRKS) are disordered. Residues 330-341 (RQHFQQQRSIST) are compositionally biased toward polar residues. A helical membrane pass occupies residues 393–413 (IWTQVLAALSVSLGSLVVGFV). The Extracellular portion of the chain corresponds to 414-440 (SAYTSPALVSMTDRNITSFEVTQDAGS). The N-linked (GlcNAc...) asparagine glycan is linked to asparagine 428. A helical transmembrane segment spans residues 441 to 461 (WVGGIMPLAGLAGGIAGGPLI). The Cytoplasmic segment spans residues 462 to 473 (EYLGRRNTILAT). The helical transmembrane segment at 474–494 (AVPFIVSSLLIACAVNVAMVL) threads the bilayer. The Extracellular segment spans residues 495-497 (CGR). The chain crosses the membrane as a helical span at residues 498-518 (FLAGFCVGIASLSLPVYLGET). Residues 519-528 (VQPEVRGTLG) lie on the Cytoplasmic side of the membrane. Residues 529 to 549 (LLPTAFGNIGILLCFVAGSFM) form a helical membrane-spanning segment. Asparagine 550 is a glycosylation site (N-linked (GlcNAc...) asparagine). At 550–552 (NWS) the chain is on the extracellular side. Residues 553 to 573 (MLAFLGAALPVPFLILMFLIP) form a helical membrane-spanning segment. Topologically, residues 574–636 (ETPRWFVGRG…ELLKLNNLKP (63 aa)) are cytoplasmic. The helical transmembrane segment at 637–657 (LSISLGLMFFQQFSGINAVIF) threads the bilayer. Topologically, residues 658–673 (YTVQIFKDAGSTIDGN) are extracellular. The chain crosses the membrane as a helical span at residues 674–694 (LCTIIVGIVNFLATFIGIVLI). The Cytoplasmic portion of the chain corresponds to 695–700 (DRAGRK). Residues 701–721 (ILLYVSDIAMVLTLFVLGGFF) form a helical membrane-spanning segment. The Extracellular segment spans residues 722 to 740 (YCKTYGPDVSHLGWLPLTC). Residues 741–761 (FVIYILGFSLGFGPIPWLMMG) traverse the membrane as a helical segment. Topologically, residues 762–767 (EILPAK) are cytoplasmic. Residues 768–788 (IRGSAASVATAFNWFCTFVVT) traverse the membrane as a helical segment. Topologically, residues 789-801 (KTFQDLTVAMGAH) are extracellular. A helical transmembrane segment spans residues 802–822 (GAFWLFGAICFVGLFFVIIYV). At 823-857 (PETQGKTLEDIERKMMGRVRRMSSVANIKPLSFNM) the chain is on the cytoplasmic side. 2 positions are modified to phosphoserine: serine 845 and serine 846.

Belongs to the major facilitator superfamily. Sugar transporter (TC 2.A.1.1) family. Trehalose transporter subfamily. As to expression, expressed in perineurial glia of the outer layer of the nervous system that forms the blood brain barrier (at protein level). Expressed in the fat body (at protein level). In terms of tissue distribution, may be specifically expressed in perineurial glia (at protein level). May be specifically expressed in the fat body (at protein level).

It localises to the cell membrane. The protein resides in the vesicle. It carries out the reaction alpha,alpha-trehalose(in) = alpha,alpha-trehalose(out). The enzyme catalyses D-glucose(out) = D-glucose(in). Its function is as follows. Low-capacity facilitative transporter for trehalose. Can also transport glucose. Does not transport maltose, sucrose, lactose or fructose. Mediates the bidirectional transfer of trehalose. Responsible for the transport of trehalose synthesized in the fat body and the incorporation of trehalose into other tissues that require a carbon source, thereby regulating trehalose levels in the hemolymph. Required in glial cells of the blood brain barrier to fuel glycolysis but not required in neurons. Neurons rely on the citric acid cycle for their energy needs and utilise alanine and lactate, by-products of glial cell glycolysis released into the hemolymph, as fuel. Increased expression in glial cells of the blood brain barrier during starvation and increased cell surface localization enhances carbohydrate uptake to protect the central nervous system from restricted nutrient availability. The sequence is that of Trehalose transporter 1 from Drosophila melanogaster (Fruit fly).